We begin with the raw amino-acid sequence, 259 residues long: Oxaloacetate tautomerase FMP41, mitochondrial (259 aa).

Glu-87, Glu-89, and Asp-121 together coordinate Mg(2+).

Belongs to the FAH family. Mg(2+) serves as cofactor. Mn(2+) is required as a cofactor.

It localises to the mitochondrion. The catalysed reaction is oxaloacetate = enol-oxaloacetate. Tautomerase that converts enol-oxaloacetate, a strong inhibitor of succinate dehydrogenase, to the physiological keto form of oxaloacetate. This Saccharomyces cerevisiae (strain ATCC 204508 / S288c) (Baker's yeast) protein is Oxaloacetate tautomerase FMP41, mitochondrial.